We begin with the raw amino-acid sequence, 65 residues long: MDYRLLEIVACPVCKGKLNYDKDKQELICKIDRLAYPIKDGIPVMLEPEARRMTMEEVESCRSQS.

Belongs to the UPF0434 family.

This is UPF0434 protein VFMJ11_A0475 from Aliivibrio fischeri (strain MJ11) (Vibrio fischeri).